We begin with the raw amino-acid sequence, 688 residues long: Elongation factor G 2 (688 aa).

A tr-type G domain is found at 7–282 (DSIRNIGIIS…AVAAYLPSPR (276 aa)). GTP contacts are provided by residues 16 to 23 (SHIDAGKT), 80 to 84 (DTPGH), and 134 to 137 (NKMD).

The protein belongs to the TRAFAC class translation factor GTPase superfamily. Classic translation factor GTPase family. EF-G/EF-2 subfamily.

The protein localises to the cytoplasm. In terms of biological role, catalyzes the GTP-dependent ribosomal translocation step during translation elongation. During this step, the ribosome changes from the pre-translocational (PRE) to the post-translocational (POST) state as the newly formed A-site-bound peptidyl-tRNA and P-site-bound deacylated tRNA move to the P and E sites, respectively. Catalyzes the coordinated movement of the two tRNA molecules, the mRNA and conformational changes in the ribosome. The polypeptide is Elongation factor G 2 (Geobacter metallireducens (strain ATCC 53774 / DSM 7210 / GS-15)).